A 457-amino-acid polypeptide reads, in one-letter code: V-type ATP synthase beta chain (457 aa).

The protein belongs to the ATPase alpha/beta chains family.

In terms of biological role, produces ATP from ADP in the presence of a proton gradient across the membrane. The V-type beta chain is a regulatory subunit. This Clostridioides difficile (strain 630) (Peptoclostridium difficile) protein is V-type ATP synthase beta chain.